We begin with the raw amino-acid sequence, 1220 residues long: Pesticidal crystal protein Cry5Ac (1220 aa).

The tract at residues Pro1194–Gln1220 is disordered. Residues Asp1198 to Gln1220 are compositionally biased toward polar residues.

The protein belongs to the delta endotoxin family.

Functionally, promotes colloidosmotic lysis by binding to the midgut epithelial cells of hymenopteran species. The polypeptide is Pesticidal crystal protein Cry5Ac (cry5Ac) (Bacillus thuringiensis).